A 432-amino-acid chain; its full sequence is Phytase AppA (432 aa).

Positions 1 to 22 (MKAILIPFLSLLIPLTPQSAFA) are cleaved as a signal peptide. Arg-38 serves as a coordination point for 1D-myo-inositol hexakisphosphate. His-39 serves as the catalytic Nucleophile. Residues 42–46 (RAPTK) and Arg-114 contribute to the 1D-myo-inositol hexakisphosphate site. Cystine bridges form between Cys-99-Cys-130, Cys-155-Cys-430, Cys-200-Cys-210, and Cys-404-Cys-413. 1D-myo-inositol hexakisphosphate is bound by residues Arg-289 and 325–327 (HDT). Asp-326 serves as the catalytic Proton donor.

The protein belongs to the histidine acid phosphatase family. In terms of assembly, monomer.

It localises to the periplasm. It carries out the reaction 1D-myo-inositol hexakisphosphate + H2O = 1D-myo-inositol 1,2,3,4,5-pentakisphosphate + phosphate. It catalyses the reaction 1D-myo-inositol 1,2,3,4,5-pentakisphosphate + H2O = 1D-myo-inositol 2,3,4,5-tetrakisphosphate + phosphate. The catalysed reaction is 1D-myo-inositol 2,3,4,5-tetrakisphosphate + H2O = 1D-myo-inositol 2,4,5-triphosphate + phosphate. The enzyme catalyses 1D-myo-inositol 2,4,5-triphosphate + H2O = 1D-myo-inositol 2,5-bisphosphate + phosphate. It carries out the reaction 1D-myo-inositol 2,5-bisphosphate + H2O = 1D-myo-inositol 2-phosphate + phosphate. It catalyses the reaction GTP + H2O = GDP + phosphate + H(+). Its activity is regulated as follows. Contains three consecutive and one non-consecutive disulfide bonds and shows a strong dependence on DsbC for its full activity. Competitively inhibited by tartaric acid and by sodium fluorid. Catalyzes the hydrolysis of phytate (or myo-inositol hexakisphosphate, an indigestible organic form of phosphorus that is found in many plant tissues) to myo-inositol and inorganic phosphate. Dephosphorylates phytate in a stereospecific way by sequential removal of phosphate groups to produce myo-inositol 2-monophosphate. Also shows phosphoanhydride phosphatase activity and hydrolyzes the distal phosphoryl residues of GTP, the 5'-beta-phosphoryl residue of the regulatory nucleotide ppGpp and tripolyphosphates. Does not split most phosphomonoesters with the exception of the synthetic substrate p-nitrophenyl phosphate (pNPP), 2,3-bisphosphoglycerate and fructose 1,6-bisphosphate. The polypeptide is Phytase AppA (Escherichia coli (strain K12)).